A 302-amino-acid polypeptide reads, in one-letter code: Protein FdhE homolog (302 aa).

It belongs to the FdhE family.

It localises to the cytoplasm. In terms of biological role, necessary for formate dehydrogenase activity. This chain is Protein FdhE homolog, found in Shewanella sp. (strain MR-4).